The primary structure comprises 533 residues: NADH-quinone oxidoreductase subunit N (533 aa).

A run of 14 helical transmembrane segments spans residues 13-33 (VWPL…EGFV), 40-60 (LVQA…TILV), 87-107 (PALF…LLFA), 141-161 (HTEV…FAAA), 164-184 (LLTL…LSGL), 200-220 (FMLG…VYGF), 243-263 (LLIG…AVPF), 275-295 (PTAV…GAML), 310-330 (QPML…IAIV), 337-357 (MLAY…LGVQ), 373-393 (VLFY…VVTL), 417-437 (VAGV…TAGF), 451-471 (GAWP…FFYV), and 502-522 (ATIF…GPVL).

It belongs to the complex I subunit 2 family. As to quaternary structure, NDH-1 is composed of 14 different subunits. Subunits NuoA, H, J, K, L, M, N constitute the membrane sector of the complex.

Its subcellular location is the cell membrane. The enzyme catalyses a quinone + NADH + 5 H(+)(in) = a quinol + NAD(+) + 4 H(+)(out). Its function is as follows. NDH-1 shuttles electrons from NADH, via FMN and iron-sulfur (Fe-S) centers, to quinones in the respiratory chain. The immediate electron acceptor for the enzyme in this species is believed to be a menaquinone. Couples the redox reaction to proton translocation (for every two electrons transferred, four hydrogen ions are translocated across the cytoplasmic membrane), and thus conserves the redox energy in a proton gradient. This Nocardioides sp. (strain ATCC BAA-499 / JS614) protein is NADH-quinone oxidoreductase subunit N.